The following is a 164-amino-acid chain: Protein SprT (164 aa).

The SprT-like domain maps to 14-156 (QQAETFFKRT…LCRRCREPLV (143 aa)). Residue histidine 69 participates in Zn(2+) binding. The active site involves glutamate 70. Histidine 73 contacts Zn(2+).

It belongs to the SprT family. Zn(2+) is required as a cofactor.

Its subcellular location is the cytoplasm. The protein is Protein SprT of Pseudomonas savastanoi pv. phaseolicola (strain 1448A / Race 6) (Pseudomonas syringae pv. phaseolicola (strain 1448A / Race 6)).